We begin with the raw amino-acid sequence, 165 residues long: Large ribosomal subunit protein uL5 (165 aa).

Belongs to the universal ribosomal protein uL5 family. As to quaternary structure, part of the 50S ribosomal subunit; contacts the 5S rRNA and probably tRNA. Forms a bridge to the 30S subunit in the 70S ribosome.

Its function is as follows. This is one of the proteins that bind and probably mediate the attachment of the 5S RNA into the large ribosomal subunit, where it forms part of the central protuberance. In the 70S ribosome it contacts protein S13 of the 30S subunit (bridge B1b), connecting the 2 subunits; this bridge is implicated in subunit movement. May contact the P site tRNA; the 5S rRNA and some of its associated proteins might help stabilize positioning of ribosome-bound tRNAs. The polypeptide is Large ribosomal subunit protein uL5 (Methanoregula boonei (strain DSM 21154 / JCM 14090 / 6A8)).